The sequence spans 225 residues: LysM and putative peptidoglycan-binding domain-containing protein 1 (225 aa).

Ser23 and Ser33 each carry phosphoserine. The region spanning 40-84 (LEHQLAPGDTLAGLALKYGVTMEQIKRANRLYTNDSIFLKKTLHI) is the LysM domain. Positions 97-153 (LDSEEEKDGEEAVQPSKDEVRPHSAERKKRERGLGHANGEPLPTAGQEPARHDLSAS) are disordered. Acidic residues predominate over residues 98 to 107 (DSEEEKDGEE). Ser99 is modified (phosphoserine). A compositionally biased stretch (basic and acidic residues) spans 112–121 (SKDEVRPHSA). A phosphoserine mark is found at Ser164, Ser179, Ser192, and Ser210. The disordered stretch occupies residues 170–225 (AAQKLKKGESGIPGEDSSLHLSSPRMQQRAVLGPVPLTQTSRTRTLRDQEDEIFKL). The span at 214 to 225 (TLRDQEDEIFKL) shows a compositional bias: basic and acidic residues.

The protein is LysM and putative peptidoglycan-binding domain-containing protein 1 (LYSMD1) of Bos taurus (Bovine).